A 169-amino-acid polypeptide reads, in one-letter code: Probable GPI-anchored adhesin-like protein PGA22 (169 aa).

The first 18 residues, 1–18 (MKYSTLAWLVIASYTVFA), serve as a signal peptide directing secretion. 4 N-linked (GlcNAc...) asparagine glycosylation sites follow: N87, N104, N111, and N118. A lipid anchor (GPI-anchor amidated glycine) is attached at G140. Positions 141 to 169 (PALTTTTVAEAFSLAAGASLGYLVALLFL) are cleaved as a propeptide — removed in mature form.

Its subcellular location is the cell membrane. Putative adhesin which may be involved in cell adhesion and virulence. This Candida albicans (strain SC5314 / ATCC MYA-2876) (Yeast) protein is Probable GPI-anchored adhesin-like protein PGA22 (PGA22).